A 572-amino-acid polypeptide reads, in one-letter code: Na(+)/citrate cotransporter (572 aa).

8 helical membrane passes run 13–33 (SFVI…LVPD), 53–73 (VIPV…LKVL), 80–100 (VQYM…ATAV), 124–144 (LMLG…NTAT), 218–238 (AASI…VLLG), 255–275 (SWFA…WLWL), 315–335 (PLSY…ILWF), and 357–377 (HVTD…VPSQ). Residue N382 is glycosylated (N-linked (GlcNAc...) asparagine). A run of 4 helical transmembrane segments spans residues 410-430 (VPWG…GCET), 443-463 (PLSS…VAMT), 491-511 (PLYV…LPVA), and 532-552 (TGLV…NTWG). N-linked (GlcNAc...) asparagine glycosylation is present at N566.

The protein belongs to the SLC13A/DASS transporter (TC 2.A.47) family. NADC subfamily. As to quaternary structure, homodimer. Expressed in liver, testis and brain.

The protein resides in the cell membrane. The enzyme catalyses citrate(out) + 4 Na(+)(out) = citrate(in) + 4 Na(+)(in). Its activity is regulated as follows. Inhibited by Li(+). Functionally, high-affinity sodium/citrate cotransporter that mediates citrate entry into cells, which is a critical participant of biochemical pathways. May function in various metabolic processes in which citrate has a critical role such as energy production (Krebs cycle), fatty acid synthesis, cholesterol synthesis, glycolysis, and gluconeogenesis. Transports citrate into the cell in a Na(+)-dependent manner, recognizing the trivalent form of citrate (physiological pH) rather than the divalent form. Can recognize succinate as a substrate, but its affinity for succinate is several fold lower than for citrate. The stoichiometry is probably 4 Na(+) for each carboxylate, irrespective of whether the translocated substrate is divalent or trivalent, rendering the process electrogenic. Involved in the regulation of citrate levels in the brain. In Rattus norvegicus (Rat), this protein is Na(+)/citrate cotransporter (Slc13a5).